Reading from the N-terminus, the 168-residue chain is MTALDIQISVEAGDWPPEDELQSFCERVLEAAADFLAREENQPLPAQAAELSLVFTDDQSIRAINAEWRGQDKATNVLSFPAFPVTPGRMPGPMLGDIVVAHETLRREAAELEKPFDAHLTHLLVHGFLHLFGYDHIEDDEAERMEGLETRILARLGLSDPYGDQPPH.

The Zn(2+) site is built by histidine 126, histidine 130, and histidine 136.

It belongs to the endoribonuclease YbeY family. Zn(2+) is required as a cofactor.

Its subcellular location is the cytoplasm. Functionally, single strand-specific metallo-endoribonuclease involved in late-stage 70S ribosome quality control and in maturation of the 3' terminus of the 16S rRNA. The chain is Endoribonuclease YbeY from Rhizobium meliloti (strain 1021) (Ensifer meliloti).